Consider the following 108-residue polypeptide: Large ribosomal subunit protein eL30 (108 aa).

This sequence belongs to the eukaryotic ribosomal protein eL30 family.

The chain is Large ribosomal subunit protein eL30 (rpl30e) from Saccharolobus solfataricus (strain ATCC 35092 / DSM 1617 / JCM 11322 / P2) (Sulfolobus solfataricus).